The primary structure comprises 670 residues: DNA ligase (670 aa).

Residues 32 to 36 (DAEYD), 81 to 82 (SL), and E113 contribute to the NAD(+) site. K115 serves as the catalytic N6-AMP-lysine intermediate. Positions 136, 173, 290, and 314 each coordinate NAD(+). Residues C406, C409, C424, and C430 each contribute to the Zn(2+) site. The BRCT domain occupies 592–670 (EIDSPFAGKT…EQEMMRLLGE (79 aa)).

It belongs to the NAD-dependent DNA ligase family. LigA subfamily. The cofactor is Mg(2+). It depends on Mn(2+) as a cofactor.

The catalysed reaction is NAD(+) + (deoxyribonucleotide)n-3'-hydroxyl + 5'-phospho-(deoxyribonucleotide)m = (deoxyribonucleotide)n+m + AMP + beta-nicotinamide D-nucleotide.. Functionally, DNA ligase that catalyzes the formation of phosphodiester linkages between 5'-phosphoryl and 3'-hydroxyl groups in double-stranded DNA using NAD as a coenzyme and as the energy source for the reaction. It is essential for DNA replication and repair of damaged DNA. This is DNA ligase from Erwinia tasmaniensis (strain DSM 17950 / CFBP 7177 / CIP 109463 / NCPPB 4357 / Et1/99).